Consider the following 948-residue polypeptide: Isoleucine--tRNA ligase (948 aa).

Residues 58–68 carry the 'HIGH' region motif; the sequence is PYANGDIHIGH. Glutamate 566 provides a ligand contact to L-isoleucyl-5'-AMP. Positions 607–611 match the 'KMSKS' region motif; the sequence is KMSKS. Position 610 (lysine 610) interacts with ATP. Cysteine 911, cysteine 914, cysteine 931, and cysteine 934 together coordinate Zn(2+).

Belongs to the class-I aminoacyl-tRNA synthetase family. IleS type 1 subfamily. In terms of assembly, monomer. It depends on Zn(2+) as a cofactor.

The protein localises to the cytoplasm. The enzyme catalyses tRNA(Ile) + L-isoleucine + ATP = L-isoleucyl-tRNA(Ile) + AMP + diphosphate. Its function is as follows. Catalyzes the attachment of isoleucine to tRNA(Ile). As IleRS can inadvertently accommodate and process structurally similar amino acids such as valine, to avoid such errors it has two additional distinct tRNA(Ile)-dependent editing activities. One activity is designated as 'pretransfer' editing and involves the hydrolysis of activated Val-AMP. The other activity is designated 'posttransfer' editing and involves deacylation of mischarged Val-tRNA(Ile). The sequence is that of Isoleucine--tRNA ligase from Vibrio vulnificus (strain CMCP6).